The following is a 228-amino-acid chain: 7-cyano-7-deazaguanine synthase (228 aa).

7-17 (LSGGLDSAVNL) contributes to the ATP binding site. Residues cysteine 192, cysteine 200, cysteine 203, and cysteine 206 each coordinate Zn(2+).

It belongs to the QueC family. As to quaternary structure, homodimer. Zn(2+) is required as a cofactor.

The enzyme catalyses 7-carboxy-7-deazaguanine + NH4(+) + ATP = 7-cyano-7-deazaguanine + ADP + phosphate + H2O + H(+). Its pathway is purine metabolism; 7-cyano-7-deazaguanine biosynthesis. Catalyzes the ATP-dependent conversion of 7-carboxy-7-deazaguanine (CDG) to 7-cyano-7-deazaguanine (preQ(0)). The protein is 7-cyano-7-deazaguanine synthase of Desulforamulus reducens (strain ATCC BAA-1160 / DSM 100696 / MI-1) (Desulfotomaculum reducens).